The primary structure comprises 642 residues: Threonine--tRNA ligase (642 aa).

Residues Met1–Thr61 enclose the TGS domain. Positions Asp243–Pro534 are catalytic. Positions 334, 385, and 511 each coordinate Zn(2+).

Belongs to the class-II aminoacyl-tRNA synthetase family. As to quaternary structure, homodimer. It depends on Zn(2+) as a cofactor.

The protein resides in the cytoplasm. It carries out the reaction tRNA(Thr) + L-threonine + ATP = L-threonyl-tRNA(Thr) + AMP + diphosphate + H(+). Its function is as follows. Catalyzes the attachment of threonine to tRNA(Thr) in a two-step reaction: L-threonine is first activated by ATP to form Thr-AMP and then transferred to the acceptor end of tRNA(Thr). Also edits incorrectly charged L-seryl-tRNA(Thr). The sequence is that of Threonine--tRNA ligase from Salmonella paratyphi C (strain RKS4594).